The chain runs to 1404 residues: Microtubule organization protein AKNA (1404 aa).

Disordered stretches follow at residues 1 to 304 (MASS…VSPL) and 317 to 382 (QHKQ…RPLI). A Phosphoserine modification is found at S51. Acidic residues predominate over residues 70–91 (WDPDMQDSEESSGEETEADDAS). Polar residues predominate over residues 185 to 203 (KSWSSGTVSLRQPSDSLGS). A Phosphoserine modification is found at S302. A phosphoserine mark is found at S485 and S520. Positions 494 to 549 (AEWWPDPAQDPQASEATGWPFPRTDLSPSSSPGVATPGRLPQSQGIATDQPSTGQT) are disordered. Residues 534–549 (PQSQGIATDQPSTGQT) are compositionally biased toward polar residues. A Phosphoserine modification is found at S617. Positions 645–659 (MDQTQRETEPCRPDL) are enriched in basic and acidic residues. Residues 645 to 708 (MDQTQRETEP…TSPGSSCTLP (64 aa)) are disordered. Composition is skewed to polar residues over residues 660-674 (QDST…QSAH) and 686-707 (DGQT…SCTL). A phosphoserine mark is found at S750 and S753. The tract at residues 754 to 787 (LPEALRDEDEDDLEEEEEEQDHQGPLEVDSPATA) is PEST. 2 disordered regions span residues 755–1038 (PEAL…STAN) and 1085–1185 (HSTQ…RERV). The span at 759-773 (RDEDEDDLEEEEEEQ) shows a compositional bias: acidic residues. Over residues 803 to 813 (TQAEESHRDAT) the composition is skewed to basic and acidic residues. Residues S831 and S860 each carry the phosphoserine modification. Residues 885–906 (HTEEPWMVSPETDSGFVGSETS) form a PEST region. Polar residues-rich tracts occupy residues 903–914 (SETSIVSPFTQT), 921–933 (HVST…QHLT), and 963–974 (SRTQQHFSSLSS). S971 bears the Phosphoserine mark. The span at 1015–1029 (TSPDSAPAPTAASTP) shows a compositional bias: low complexity. A compositionally biased stretch (polar residues) spans 1085–1098 (HSTQTQEKLGSSPS). The segment at residues 1088 to 1096 (QTQEKLGSS) is a DNA-binding region (a.T hook). A phosphoserine mark is found at S1144 and S1145. A compositionally biased stretch (basic and acidic residues) spans 1155–1167 (SSEKSRTFEEHPE). S1200 is modified (phosphoserine). Disordered regions lie at residues 1208-1235 (SGTP…TTRG) and 1253-1286 (SAEA…QTGS). Residues 1221-1235 (TQDTGSAVSRDTTRG) show a composition bias toward polar residues. Residues S1339, S1352, and S1389 each carry the phosphoserine modification.

It belongs to the AKNA family. As to quaternary structure, interacts with DCTN1. Interacts with MAPRE1/EB1. Interacts with ODF2. Interacts with CAMSAP3. Post-translationally, phosphorylated; phosphorylation regulates dissociation from and reassembly at the centrosome. Expressed in neural stem cells isolated at the peak of subventricular zone (SVZ): localizes at the subdistal appendages of the mother centriole in specific subtypes of neural stem cells and in almost all basal progenitors.

It is found in the cytoplasm. Its subcellular location is the cytoskeleton. The protein resides in the microtubule organizing center. It localises to the centrosome. The protein localises to the centriole. It is found in the nucleus. Functionally, centrosomal protein that plays a key role in cell delamination by regulating microtubule organization. Required for the delamination and retention of neural stem cells from the subventricular zone during neurogenesis. Also regulates the epithelial-to-mesenchymal transition in other epithelial cells. Acts by increasing centrosomal microtubule nucleation and recruiting nucleation factors and minus-end stabilizers, thereby destabilizing microtubules at the adherens junctions and mediating constriction of the apical endfoot. In addition, may also act as a transcription factor that specifically activates the expression of the CD40 receptor and its ligand CD40L/CD154, two cell surface molecules on lymphocytes that are critical for antigen-dependent-B-cell development. Binds to A/T-rich promoters. It is unclear how it can both act as a microtubule organizer and as a transcription factor; additional evidences are required to reconcile these two apparently contradictory functions. The protein is Microtubule organization protein AKNA of Mus musculus (Mouse).